Consider the following 1116-residue polypeptide: Auxin response factor 21 (1116 aa).

The TF-B3 DNA-binding region spans 132–234 (FCKTLTASDT…QLLLGIRRAN (103 aa)). Residues 763–812 (KTDDVPSTSTSPSTNSNPVLLQSIPSSSKNQSLTTAGKTSQSSVVLGPTI) are disordered. A compositionally biased stretch (low complexity) spans 768–780 (PSTSTSPSTNSNP). The span at 781–806 (VLLQSIPSSSKNQSLTTAGKTSQSSV) shows a compositional bias: polar residues. A PB1 domain is found at 998–1082 (RTYTKVHKRG…RCIRILSPQE (85 aa)).

The protein belongs to the ARF family. As to quaternary structure, homodimers and heterodimers. Expressed in roots, culms, leaves and young panicles.

It is found in the nucleus. Functionally, auxin response factors (ARFs) are transcriptional factors that bind specifically to the DNA sequence 5'-TGTCTC-3' found in the auxin-responsive promoter elements (AuxREs). The protein is Auxin response factor 21 (ARF21) of Oryza sativa subsp. japonica (Rice).